The chain runs to 165 residues: Heme oxygenase (165 aa).

This sequence belongs to the heme oxygenase family.

The enzyme catalyses heme b + 3 reduced [NADPH--hemoprotein reductase] + 3 O2 = biliverdin IXalpha + CO + Fe(2+) + 3 oxidized [NADPH--hemoprotein reductase] + 3 H2O + H(+). Functionally, catalyzes the opening of the heme ring to form the open-chain tetrapyrrole biliverdin IX with the release of iron and carbon monoxide (CO). This Xanthomonas campestris pv. campestris (strain 8004) protein is Heme oxygenase (bphO).